A 342-amino-acid chain; its full sequence is Ferredoxin--NADP reductase (342 aa).

FAD-binding residues include C17, D36, Q44, Y49, V89, F124, D289, and T330.

Belongs to the ferredoxin--NADP reductase type 2 family. Homodimer. Requires FAD as cofactor.

The catalysed reaction is 2 reduced [2Fe-2S]-[ferredoxin] + NADP(+) + H(+) = 2 oxidized [2Fe-2S]-[ferredoxin] + NADPH. The chain is Ferredoxin--NADP reductase from Rhodopseudomonas palustris (strain ATCC BAA-98 / CGA009).